Reading from the N-terminus, the 874-residue chain is Oxidation resistance protein 1 (874 aa).

The segment at 1–89 is disordered; sequence MTKDKNSPGL…KTLDKKDGRR (89 aa). The span at 64-89 shows a compositional bias: basic and acidic residues; the sequence is RRSELKRFYTIDTGQKKTLDKKDGRR. Phosphoserine is present on serine 91. The region spanning 99–142 is the LysM domain; the sequence is IEYTVESRDSLNSIALKFDTTPNELVQLNKLFSRAVVTGQVLYV. Position 119 is a phosphothreonine (threonine 119). Over residues 151 to 169 the composition is skewed to low complexity; sequence VESSPSLSPVSPLSPTSSE. Residues 151-194 are disordered; the sequence is VESSPSLSPVSPLSPTSSEAEFDKTTNPDVHPTEATPSSTFTGI. Phosphoserine is present on residues serine 201, serine 202, and serine 204. A GRAM domain is found at 208–275; the sequence is EAFTEKFLKI…EEVMSAAMYK (68 aa). A phosphoserine mark is found at serine 294, serine 334, and serine 336. Disordered stretches follow at residues 299–406 and 431–537; these read CHSK…TNEV and FQGI…ITSA. The residue at position 341 (threonine 341) is a Phosphothreonine. The residue at position 346 (serine 346) is a Phosphoserine. Residues 347–362 are compositionally biased toward basic and acidic residues; that stretch reads PIREELVSSDELRQDK. Polar residues predominate over residues 363–391; the sequence is SSGASSESVQTVNQAEVESLTVKSESTGT. The segment covering 452-466 has biased composition (basic and acidic residues); that stretch reads SFLHENSLHQEESQK. Residue serine 496 is modified to Phosphoserine. Residues 510-527 show a composition bias toward polar residues; sequence HTMQQTKQQRENIQQVSQ. The mediates oxidative antimutator activity stretch occupies residues 551 to 578; that stretch reads QRHRLHKFLCLRVGKPMRKTFVSQASAT. The region spanning 713 to 874 is the TLDc domain; it reads ELLLPDQIEK…IQDIEIWAFE (162 aa).

Belongs to the OXR1 family.

It localises to the mitochondrion. Functionally, may be involved in protection from oxidative damage. This chain is Oxidation resistance protein 1 (OXR1), found in Homo sapiens (Human).